The primary structure comprises 499 residues: Bestrophin homolog 22 (499 aa).

The next 4 helical transmembrane spans lie at 29–49 (WKAV…ISCI), 77–97 (IPLT…WGSI), 235–255 (LVYP…CLIG), and 267–287 (GIDL…MGWM). Residues 417-432 (HNAKHAKQRGLERANS) show a composition bias toward basic and acidic residues. Disordered regions lie at residues 417–455 (HNAK…ANGS) and 474–499 (TSNP…TSRH).

It belongs to the anion channel-forming bestrophin (TC 1.A.46) family. Calcium-sensitive chloride channel subfamily. Forms oligomers.

It localises to the cell membrane. Functionally, forms chloride channels. This Caenorhabditis elegans protein is Bestrophin homolog 22 (best-22).